The primary structure comprises 350 residues: Arabinogalactan endo-beta-1,4-galactanase A (350 aa).

Residues 1–16 form the signal peptide; sequence MIYPLLLSALPLLSSA. N128 is a glycosylation site (N-linked (GlcNAc...) asparagine). The Proton donor role is filled by E152. E262 acts as the Nucleophile in catalysis.

It belongs to the glycosyl hydrolase 53 family.

Its subcellular location is the secreted. It carries out the reaction The enzyme specifically hydrolyzes (1-&gt;4)-beta-D-galactosidic linkages in type I arabinogalactans.. Endogalactanase involved in the degradation of plant cell wall polysaccharides, and more particularly of hairy regions of pectin. The polypeptide is Arabinogalactan endo-beta-1,4-galactanase A (galA) (Aspergillus niger).